The following is a 143-amino-acid chain: Mini-ribonuclease 3 (143 aa).

D23 is an active-site residue.

Belongs to the MrnC RNase family. As to quaternary structure, homodimer. The cofactor is Mg(2+).

Its subcellular location is the cytoplasm. Involved in correct processing of both the 5' and 3' ends of 23S rRNA precursor. Processes 30S rRNA precursor transcript even in absence of ribonuclease 3 (Rnc); Rnc processes 30S rRNA into smaller rRNA precursors. Cleaves more efficiently on assembled 50S ribosomal subunits. Cleavage is strongly stimulated by ribosomal protein L3 (RplC); 20-30% DMSO can replace RplC, suggesting RplC may alter rRNA conformation. This chain is Mini-ribonuclease 3 (mrnC), found in Bacillus subtilis (strain 168).